Consider the following 394-residue polypeptide: Phosphoglycerate kinase (394 aa).

Substrate is bound by residues 21–23 (DFN), arginine 36, 59–62 (HLGR), arginine 118, and arginine 151. Residue serine 183 is modified to Phosphoserine. 2 residues coordinate ATP: lysine 201 and glycine 292. A Phosphothreonine modification is found at threonine 299. Residues glutamate 323 and 350–353 (GGDS) each bind ATP.

The protein belongs to the phosphoglycerate kinase family. As to quaternary structure, monomer.

It localises to the cytoplasm. It catalyses the reaction (2R)-3-phosphoglycerate + ATP = (2R)-3-phospho-glyceroyl phosphate + ADP. Its pathway is carbohydrate degradation; glycolysis; pyruvate from D-glyceraldehyde 3-phosphate: step 2/5. The chain is Phosphoglycerate kinase from Bacillus thuringiensis subsp. konkukian (strain 97-27).